Reading from the N-terminus, the 475-residue chain is Ankyrin repeat, SAM and basic leucine zipper domain-containing protein 1 (475 aa).

The interval 1-23 (MAAARFRGLAVAGGGESSESEDD) is disordered. S17, S18, and S20 each carry phosphoserine. ANK repeat units lie at residues 45–74 (EKNE…SVDS), 78–107 (YGWT…KASF), 110–144 (DKQT…DPNV), 148–177 (RLMT…EVNT), 181–210 (NGYT…NKML), and 214–243 (DGKT…PLEG). The 63-residue stretch at 272-334 (SYTAFGDLEI…KILAALKELE (63 aa)) folds into the SAM domain.

As to quaternary structure, interacts with DDX4, PIWIL1, RANBP9 and TDRD1.

The protein resides in the cytoplasm. In terms of biological role, plays a central role during spermatogenesis by repressing transposable elements and preventing their mobilization, which is essential for the germline integrity. Acts via the piRNA metabolic process, which mediates the repression of transposable elements during meiosis by forming complexes composed of piRNAs and Piwi proteins and governs the methylation and subsequent repression of transposons. Its association with pi-bodies suggests a participation in the primary piRNAs metabolic process. Required prior to the pachytene stage to facilitate the production of multiple types of piRNAs, including those associated with repeats involved in the regulation of retrotransposons. May act by mediating protein-protein interactions during germ cell maturation. This chain is Ankyrin repeat, SAM and basic leucine zipper domain-containing protein 1 (ASZ1), found in Equus caballus (Horse).